Here is a 460-residue protein sequence, read N- to C-terminus: Bifunctional protein GlmU (460 aa).

Positions 1 to 235 (MALSAAIILA…PLSVEGVNDR (235 aa)) are pyrophosphorylase. UDP-N-acetyl-alpha-D-glucosamine contacts are provided by residues 9-12 (LAAG), Lys-23, Gln-76, and 81-82 (GT). Position 109 (Asp-109) interacts with Mg(2+). UDP-N-acetyl-alpha-D-glucosamine-binding residues include Gly-146, Glu-161, Asn-176, and Asn-233. Asn-233 is a Mg(2+) binding site. The tract at residues 236 to 256 (VQLAALAKAHNKRVCEHWMRE) is linker. Residues 257-460 (GVTILDPDTT…VEGWKPEWER (204 aa)) form an N-acetyltransferase region. UDP-N-acetyl-alpha-D-glucosamine contacts are provided by Arg-338 and Lys-356. His-368 functions as the Proton acceptor in the catalytic mechanism. UDP-N-acetyl-alpha-D-glucosamine is bound by residues Tyr-371 and Asn-382. Residues 391–392 (NY) and Ala-428 contribute to the acetyl-CoA site.

In the N-terminal section; belongs to the N-acetylglucosamine-1-phosphate uridyltransferase family. The protein in the C-terminal section; belongs to the transferase hexapeptide repeat family. Homotrimer. Requires Mg(2+) as cofactor.

It localises to the cytoplasm. It carries out the reaction alpha-D-glucosamine 1-phosphate + acetyl-CoA = N-acetyl-alpha-D-glucosamine 1-phosphate + CoA + H(+). The catalysed reaction is N-acetyl-alpha-D-glucosamine 1-phosphate + UTP + H(+) = UDP-N-acetyl-alpha-D-glucosamine + diphosphate. Its pathway is nucleotide-sugar biosynthesis; UDP-N-acetyl-alpha-D-glucosamine biosynthesis; N-acetyl-alpha-D-glucosamine 1-phosphate from alpha-D-glucosamine 6-phosphate (route II): step 2/2. It functions in the pathway nucleotide-sugar biosynthesis; UDP-N-acetyl-alpha-D-glucosamine biosynthesis; UDP-N-acetyl-alpha-D-glucosamine from N-acetyl-alpha-D-glucosamine 1-phosphate: step 1/1. The protein operates within bacterial outer membrane biogenesis; LPS lipid A biosynthesis. Catalyzes the last two sequential reactions in the de novo biosynthetic pathway for UDP-N-acetylglucosamine (UDP-GlcNAc). The C-terminal domain catalyzes the transfer of acetyl group from acetyl coenzyme A to glucosamine-1-phosphate (GlcN-1-P) to produce N-acetylglucosamine-1-phosphate (GlcNAc-1-P), which is converted into UDP-GlcNAc by the transfer of uridine 5-monophosphate (from uridine 5-triphosphate), a reaction catalyzed by the N-terminal domain. This chain is Bifunctional protein GlmU, found in Bifidobacterium adolescentis (strain ATCC 15703 / DSM 20083 / NCTC 11814 / E194a).